A 451-amino-acid polypeptide reads, in one-letter code: Bifunctional protein GlmU (451 aa).

The segment at 1 to 226 (MVAVAILAAG…YLEISGINDR (226 aa)) is pyrophosphorylase. UDP-N-acetyl-alpha-D-glucosamine-binding positions include 7 to 10 (LAAG), Lys-21, Gln-73, and 78 to 79 (GT). A Mg(2+)-binding site is contributed by Asp-103. UDP-N-acetyl-alpha-D-glucosamine is bound by residues Gly-140, Glu-155, Asn-170, and Asn-224. Asn-224 provides a ligand contact to Mg(2+). Positions 227 to 247 (KQLATAYDILQNRIKDYWMRA) are linker. The tract at residues 248-451 (GVTLIDPDSI…ISGWRMKTDD (204 aa)) is N-acetyltransferase. Residues Arg-329 and Lys-347 each contribute to the UDP-N-acetyl-alpha-D-glucosamine site. His-359 serves as the catalytic Proton acceptor. UDP-N-acetyl-alpha-D-glucosamine contacts are provided by Tyr-362 and Asn-373. Acetyl-CoA contacts are provided by residues Ala-376, 382-383 (NY), Ala-419, and Arg-436.

The protein in the N-terminal section; belongs to the N-acetylglucosamine-1-phosphate uridyltransferase family. It in the C-terminal section; belongs to the transferase hexapeptide repeat family. In terms of assembly, homotrimer. The cofactor is Mg(2+).

It localises to the cytoplasm. The catalysed reaction is alpha-D-glucosamine 1-phosphate + acetyl-CoA = N-acetyl-alpha-D-glucosamine 1-phosphate + CoA + H(+). It catalyses the reaction N-acetyl-alpha-D-glucosamine 1-phosphate + UTP + H(+) = UDP-N-acetyl-alpha-D-glucosamine + diphosphate. It participates in nucleotide-sugar biosynthesis; UDP-N-acetyl-alpha-D-glucosamine biosynthesis; N-acetyl-alpha-D-glucosamine 1-phosphate from alpha-D-glucosamine 6-phosphate (route II): step 2/2. It functions in the pathway nucleotide-sugar biosynthesis; UDP-N-acetyl-alpha-D-glucosamine biosynthesis; UDP-N-acetyl-alpha-D-glucosamine from N-acetyl-alpha-D-glucosamine 1-phosphate: step 1/1. The protein operates within bacterial outer membrane biogenesis; LPS lipid A biosynthesis. In terms of biological role, catalyzes the last two sequential reactions in the de novo biosynthetic pathway for UDP-N-acetylglucosamine (UDP-GlcNAc). The C-terminal domain catalyzes the transfer of acetyl group from acetyl coenzyme A to glucosamine-1-phosphate (GlcN-1-P) to produce N-acetylglucosamine-1-phosphate (GlcNAc-1-P), which is converted into UDP-GlcNAc by the transfer of uridine 5-monophosphate (from uridine 5-triphosphate), a reaction catalyzed by the N-terminal domain. This is Bifunctional protein GlmU from Gloeothece citriformis (strain PCC 7424) (Cyanothece sp. (strain PCC 7424)).